A 136-amino-acid polypeptide reads, in one-letter code: Large-conductance mechanosensitive channel (136 aa).

A run of 3 helical transmembrane segments spans residues 15–35 (IDLA…NSIV), 38–58 (IFMP…MFIQ), and 80–100 (GHFI…FFFV).

It belongs to the MscL family. In terms of assembly, homopentamer.

Its subcellular location is the cell inner membrane. Functionally, channel that opens in response to stretch forces in the membrane lipid bilayer. May participate in the regulation of osmotic pressure changes within the cell. The polypeptide is Large-conductance mechanosensitive channel (Bartonella tribocorum (strain CIP 105476 / IBS 506)).